A 352-amino-acid polypeptide reads, in one-letter code: Photosystem II D2 protein (352 aa).

Residue threonine 2 is modified to N-acetylthreonine. Position 2 is a phosphothreonine (threonine 2). The helical transmembrane segment at 40-60 (TAYLALGGWFTGTTFVTSWYT) threads the bilayer. Residue histidine 117 coordinates chlorophyll a. The helical transmembrane segment at 124–140 (GFMLRQFEIARSVKIRP) threads the bilayer. Residues glutamine 129 and asparagine 142 each coordinate pheophytin a. The helical transmembrane segment at 152-165 (VFVSVFLIYPLGQS) threads the bilayer. Histidine 197 is a binding site for chlorophyll a. The chain crosses the membrane as a helical span at residues 207–227 (AALLCAIHGATVENTLFEDGD). Histidine 214 and phenylalanine 261 together coordinate a plastoquinone. Fe cation is bound at residue histidine 214. Position 268 (histidine 268) interacts with Fe cation. Residues 278–294 (GLWMSAIGVVGLALNLR) traverse the membrane as a helical segment.

It belongs to the reaction center PufL/M/PsbA/D family. In terms of assembly, PSII is composed of 1 copy each of membrane proteins PsbA, PsbB, PsbC, PsbD, PsbE, PsbF, PsbH, PsbI, PsbJ, PsbK, PsbL, PsbM, PsbT, PsbX, PsbY, PsbZ, Psb30/Ycf12, at least 3 peripheral proteins of the oxygen-evolving complex and a large number of cofactors. It forms dimeric complexes. Requires The D1/D2 heterodimer binds P680, chlorophylls that are the primary electron donor of PSII, and subsequent electron acceptors. It shares a non-heme iron and each subunit binds pheophytin, quinone, additional chlorophylls, carotenoids and lipids. There is also a Cl(-1) ion associated with D1 and D2, which is required for oxygen evolution. The PSII complex binds additional chlorophylls, carotenoids and specific lipids. as cofactor.

Its subcellular location is the plastid. The protein localises to the chloroplast thylakoid membrane. The enzyme catalyses 2 a plastoquinone + 4 hnu + 2 H2O = 2 a plastoquinol + O2. Photosystem II (PSII) is a light-driven water:plastoquinone oxidoreductase that uses light energy to abstract electrons from H(2)O, generating O(2) and a proton gradient subsequently used for ATP formation. It consists of a core antenna complex that captures photons, and an electron transfer chain that converts photonic excitation into a charge separation. The D1/D2 (PsbA/PsbD) reaction center heterodimer binds P680, the primary electron donor of PSII as well as several subsequent electron acceptors. D2 is needed for assembly of a stable PSII complex. The polypeptide is Photosystem II D2 protein (Chlorella vulgaris (Green alga)).